Consider the following 311-residue polypeptide: Mitoferrin (311 aa).

3 Solcar repeats span residues 15–102 (HSIP…MKSF), 111–195 (EHTL…WQQV), and 202–302 (YDPK…FKFM). 6 consecutive transmembrane segments (helical) span residues 17–36 (IPVH…CVMF), 77–96 (GVNA…FTVY), 112–132 (HTLA…AVMN), 170–189 (SYTT…FMGY), 204–223 (PKSH…AVTT), and 277–296 (GLQA…WSVY).

Belongs to the mitochondrial carrier (TC 2.A.29) family.

The protein localises to the mitochondrion inner membrane. Its function is as follows. Mitochondrial iron transporter that mediates iron uptake. Probably required for heme synthesis of hemoproteins and Fe-S cluster assembly. In Caenorhabditis briggsae, this protein is Mitoferrin.